Reading from the N-terminus, the 472-residue chain is RNA pseudouridine synthase 6, chloroplastic (472 aa).

A chloroplast-targeting transit peptide spans Met-1–Ser-66. Residues Val-101 to Lys-208 enclose the S4 RNA-binding domain. Asp-261 is an active-site residue.

This sequence belongs to the pseudouridine synthase RluA family.

The protein resides in the plastid. Its subcellular location is the chloroplast. It carries out the reaction a uridine in RNA = a pseudouridine in RNA. This Arabidopsis thaliana (Mouse-ear cress) protein is RNA pseudouridine synthase 6, chloroplastic.